A 560-amino-acid chain; its full sequence is MLLEQQKQLISLIQAAVAQCLPEAQAQVQLERPKVAAHGDIATNVAMQLAKPARRNPRELAQGIVDALMAQPQARELIQDAEIAGPGFINFRLTPAARQAVVQAVASQADAYGRAPRNGEKVLVEFVSANPTGPLHVGHARQAALGDAICRLYDASGWDVTREFYYNDAGNQIDNLAISVQARGRGIAPDAPDYPADGYKGDYIVEIARDFAARKSVQASDGQPVTATGDLDSLDDIRAFAVAYLRREQDLDLQAFGLAFDNYFLESSLYASGRVQETVDTLVAKGHTYEEGGALWLRTTELGTGDDKDRVMRKSEGGYTYFVPDVAYHKVKWERGFHHAVNIQGSDHHGTVARVRAGLQGLAGIPKDFPAYVLHKMVKVMRGGEEVKISKRAGSYVTMRDLIDWVGRDAVRYFLIQRRADTEFVFDIDLALSKSDENPVYYIQYAHARICTMIGNSGASAAEIAQADTALLTAPSEYALLQRLAEFPQVVALAAQELAPHHVAFWLRDCASDFHAWYNAERVLVDEPALKLARLRLAATTRQVLANGLALLGVSAPDRM.

The 'HIGH' region motif lies at Phe164–Asp174.

This sequence belongs to the class-I aminoacyl-tRNA synthetase family. In terms of assembly, monomer.

It localises to the cytoplasm. It catalyses the reaction tRNA(Arg) + L-arginine + ATP = L-arginyl-tRNA(Arg) + AMP + diphosphate. The sequence is that of Arginine--tRNA ligase from Bordetella pertussis (strain Tohama I / ATCC BAA-589 / NCTC 13251).